We begin with the raw amino-acid sequence, 399 residues long: 1-deoxy-D-xylulose 5-phosphate reductoisomerase (399 aa).

Residues threonine 13, glycine 14, serine 15, isoleucine 16, and asparagine 127 each coordinate NADPH. Lysine 128 is a binding site for 1-deoxy-D-xylulose 5-phosphate. Glutamate 129 provides a ligand contact to NADPH. Aspartate 153 contacts Mn(2+). Serine 154, glutamate 155, serine 187, and histidine 210 together coordinate 1-deoxy-D-xylulose 5-phosphate. Glutamate 155 provides a ligand contact to Mn(2+). Residue glycine 216 coordinates NADPH. Residues serine 223, asparagine 228, lysine 229, and glutamate 232 each coordinate 1-deoxy-D-xylulose 5-phosphate. Glutamate 232 is a Mn(2+) binding site.

It belongs to the DXR family. It depends on Mg(2+) as a cofactor. Mn(2+) is required as a cofactor.

The catalysed reaction is 2-C-methyl-D-erythritol 4-phosphate + NADP(+) = 1-deoxy-D-xylulose 5-phosphate + NADPH + H(+). It participates in isoprenoid biosynthesis; isopentenyl diphosphate biosynthesis via DXP pathway; isopentenyl diphosphate from 1-deoxy-D-xylulose 5-phosphate: step 1/6. Catalyzes the NADPH-dependent rearrangement and reduction of 1-deoxy-D-xylulose-5-phosphate (DXP) to 2-C-methyl-D-erythritol 4-phosphate (MEP). This is 1-deoxy-D-xylulose 5-phosphate reductoisomerase from Bordetella petrii (strain ATCC BAA-461 / DSM 12804 / CCUG 43448).